Reading from the N-terminus, the 346-residue chain is MNPHATPVLVLSLALGTTITISSNHWVLAWTGLEINTLAIIPLISKSHHPRAVEAATKYFLTQAAASALVLFSSMTNAWATGQWDITQLNHPTSCLLLTAAIAIKLGLVPFHFWFPEVLQGSPLMTALLLSTLMKFPPLTLLLMTSKSLNPALLTTMALASAALGGWMGLNQTQTRKILAFSSISHLGWIAIILVYSPKLALLTFYLYTIMTSAVFMALNKIKALNMSMVLTSWTKTPVLNATLMLMLLSLAGLPPLTGFMPKWLIIQELTKQEMTPAAMAIAMLSLLSLFFYLRLAYHSTITLPPNSSNHMKQWYTSKPPSTPTAILASLSILLLPLSPMVHAIV.

11 consecutive transmembrane segments (helical) span residues 1 to 21 (MNPH…TITI), 25 to 45 (HWVL…PLIS), 60 to 80 (FLTQ…NAWA), 95 to 115 (CLLL…HFWF), 124 to 144 (LMTA…LLLM), 149 to 169 (LNPA…GWMG), 178 to 195 (ILAF…IILV), 200 to 219 (LALL…FMAL), 242 to 262 (ATLM…GFMP), 274 to 294 (EMTP…FFYL), and 326 to 346 (AILA…HAIV).

Belongs to the complex I subunit 2 family.

The protein localises to the mitochondrion inner membrane. The catalysed reaction is a ubiquinone + NADH + 5 H(+)(in) = a ubiquinol + NAD(+) + 4 H(+)(out). Core subunit of the mitochondrial membrane respiratory chain NADH dehydrogenase (Complex I) that is believed to belong to the minimal assembly required for catalysis. Complex I functions in the transfer of electrons from NADH to the respiratory chain. The immediate electron acceptor for the enzyme is believed to be ubiquinone. The chain is NADH-ubiquinone oxidoreductase chain 2 (MT-ND2) from Mareca penelope (Eurasian wigeon).